We begin with the raw amino-acid sequence, 644 residues long: Phosphomethylpyrimidine synthase (644 aa).

Substrate is bound by residues N236, M265, Y294, H330, 350-352 (SRG), 391-394 (DGLR), and E430. Zn(2+) is bound at residue H434. Y457 is a substrate binding site. A Zn(2+)-binding site is contributed by H498. 3 residues coordinate [4Fe-4S] cluster: C578, C581, and C586.

The protein belongs to the ThiC family. Homodimer. [4Fe-4S] cluster serves as cofactor.

The enzyme catalyses 5-amino-1-(5-phospho-beta-D-ribosyl)imidazole + S-adenosyl-L-methionine = 4-amino-2-methyl-5-(phosphooxymethyl)pyrimidine + CO + 5'-deoxyadenosine + formate + L-methionine + 3 H(+). The protein operates within cofactor biosynthesis; thiamine diphosphate biosynthesis. Its function is as follows. Catalyzes the synthesis of the hydroxymethylpyrimidine phosphate (HMP-P) moiety of thiamine from aminoimidazole ribotide (AIR) in a radical S-adenosyl-L-methionine (SAM)-dependent reaction. In Aliivibrio fischeri (strain ATCC 700601 / ES114) (Vibrio fischeri), this protein is Phosphomethylpyrimidine synthase.